Consider the following 926-residue polypeptide: Alanine--tRNA ligase (926 aa).

Residues histidine 577, histidine 581, cysteine 680, and histidine 684 each contribute to the Zn(2+) site.

This sequence belongs to the class-II aminoacyl-tRNA synthetase family. The cofactor is Zn(2+).

The protein resides in the cytoplasm. The enzyme catalyses tRNA(Ala) + L-alanine + ATP = L-alanyl-tRNA(Ala) + AMP + diphosphate. Functionally, catalyzes the attachment of alanine to tRNA(Ala) in a two-step reaction: alanine is first activated by ATP to form Ala-AMP and then transferred to the acceptor end of tRNA(Ala). Also edits incorrectly charged Ser-tRNA(Ala) and Gly-tRNA(Ala) via its editing domain. This chain is Alanine--tRNA ligase, found in Methylacidiphilum infernorum (isolate V4) (Methylokorus infernorum (strain V4)).